Here is a 253-residue protein sequence, read N- to C-terminus: Imidazole glycerol phosphate synthase subunit HisF (253 aa).

Residues aspartate 11 and aspartate 130 contribute to the active site.

This sequence belongs to the HisA/HisF family. Heterodimer of HisH and HisF.

The protein resides in the cytoplasm. It catalyses the reaction 5-[(5-phospho-1-deoxy-D-ribulos-1-ylimino)methylamino]-1-(5-phospho-beta-D-ribosyl)imidazole-4-carboxamide + L-glutamine = D-erythro-1-(imidazol-4-yl)glycerol 3-phosphate + 5-amino-1-(5-phospho-beta-D-ribosyl)imidazole-4-carboxamide + L-glutamate + H(+). The protein operates within amino-acid biosynthesis; L-histidine biosynthesis; L-histidine from 5-phospho-alpha-D-ribose 1-diphosphate: step 5/9. Its function is as follows. IGPS catalyzes the conversion of PRFAR and glutamine to IGP, AICAR and glutamate. The HisF subunit catalyzes the cyclization activity that produces IGP and AICAR from PRFAR using the ammonia provided by the HisH subunit. In Geotalea daltonii (strain DSM 22248 / JCM 15807 / FRC-32) (Geobacter daltonii), this protein is Imidazole glycerol phosphate synthase subunit HisF.